Consider the following 131-residue polypeptide: Small ribosomal subunit protein uS8 (131 aa).

It belongs to the universal ribosomal protein uS8 family. As to quaternary structure, part of the 30S ribosomal subunit. Contacts proteins S5 and S12.

One of the primary rRNA binding proteins, it binds directly to 16S rRNA central domain where it helps coordinate assembly of the platform of the 30S subunit. The protein is Small ribosomal subunit protein uS8 of Mycoplasmopsis agalactiae (strain NCTC 10123 / CIP 59.7 / PG2) (Mycoplasma agalactiae).